We begin with the raw amino-acid sequence, 92 residues long: Small ribosomal subunit protein uS19c (92 aa).

The protein belongs to the universal ribosomal protein uS19 family.

Its subcellular location is the plastid. It is found in the chloroplast. Protein S19 forms a complex with S13 that binds strongly to the 16S ribosomal RNA. The protein is Small ribosomal subunit protein uS19c of Angiopteris evecta (Mule's foot fern).